The chain runs to 442 residues: D-serine dehydratase (442 aa).

K118 is modified (N6-(pyridoxal phosphate)lysine).

The protein belongs to the serine/threonine dehydratase family. DsdA subfamily. As to quaternary structure, monomer. Pyridoxal 5'-phosphate serves as cofactor.

The catalysed reaction is D-serine = pyruvate + NH4(+). The protein is D-serine dehydratase of Escherichia coli (strain K12 / MC4100 / BW2952).